We begin with the raw amino-acid sequence, 184 residues long: MEGFFWKTWLVVAAFAIGGTSSLPHKPLTYEEAVDLAVSTYNGKSGEESLYRLLEAVPPPKWDPLSESNQELNLTIKETVCLVAEERSLEECDFQDDGAVMGCTGYFFFGESPPVLVLTCEPLGEDEEQNQEEEEEEEKEEDEKDQPRRVKRFKKFFMKLKKSVKKRVMKFFKKPMVIGVTFPF.

The first 22 residues, 1–22 (MEGFFWKTWLVVAAFAIGGTSS), serve as a signal peptide directing secretion. A propeptide spanning residues 23–150 (LPHKPLTYEE…EDEKDQPRRV (128 aa)) is cleaved from the precursor. 2 cysteine pairs are disulfide-bonded: Cys81–Cys92 and Cys103–Cys120. A compositionally biased stretch (acidic residues) spans 125–144 (EDEEQNQEEEEEEEKEEDEK). Residues 125 to 147 (EDEEQNQEEEEEEEKEEDEKDQP) form a disordered region.

It belongs to the cathelicidin family. Expressed by the venom gland.

The protein resides in the secreted. Its subcellular location is the target cell membrane. Functionally, potent antimicrobial peptide against Gram-negative (MIC=2 ug/ml against E.coli ATCC 25922, MIC=8 ug/ml against P.aeruginosa) and Gram-positive bacteria (MIC=32 ug/ml against E.faecalis, MIC=32 ug/ml against S.aureus). Adopts an amphipathic alpha helical conformation, that may allow to partition into the target membrane. High hemolytic activities have been observed on mammalian cells. This is Cathelicidin-related peptide Pt_CRAMP1 from Pseudonaja textilis (Eastern brown snake).